Consider the following 107-residue polypeptide: Benzene 1,2-dioxygenase system ferredoxin subunit (107 aa).

Residues 4-99 (TYILRQSDLP…IKVEGDEVHV (96 aa)) enclose the Rieske domain. C43, H45, C62, and H65 together coordinate [2Fe-2S] cluster.

It belongs to the bacterial ring-hydroxylating dioxygenase ferredoxin component family. As to quaternary structure, this dioxygenase system consists of four proteins: the two subunits of the hydroxylase component (BnzA and BnzB), a ferredoxin (BnzC) and a ferredoxin reductase (BnzD).

It participates in aromatic compound metabolism; benzene degradation; catechol from benzene: step 1/2. Its function is as follows. This protein seems to be a 2Fe-2S ferredoxin. This is Benzene 1,2-dioxygenase system ferredoxin subunit (bnzC) from Pseudomonas putida (Arthrobacter siderocapsulatus).